The chain runs to 420 residues: uncharacterized protein (420 aa).

The signal sequence occupies residues 1–25 (MRYAMNKIPALLLVGALIIATVASG). An N-acetylcysteine modification is found at C26. C26 is lipidated: S-archaeol cysteine.

The protein belongs to the bacterial solute-binding protein 1 family.

Its subcellular location is the cell membrane. In terms of biological role, probably part of a binding-protein-dependent transport system PH1036/38/39. This is an uncharacterized protein from Pyrococcus horikoshii (strain ATCC 700860 / DSM 12428 / JCM 9974 / NBRC 100139 / OT-3).